Consider the following 475-residue polypeptide: Chromosomal replication initiator protein DnaA (475 aa).

Positions 1 to 73 (MSDIEQERWS…LACWQAELPD (73 aa)) are domain I, interacts with DnaA modulators. The domain II stretch occupies residues 73 to 131 (DVHRIDLMVRSAMRCAAPAKEAPAADPRRPEHGDGRASTELKMVATAPASANHDALGGS). The tract at residues 132–354 (PLDPRLTFAS…GAINRLLAHS (223 aa)) is domain III, AAA+ region. ATP is bound by residues Gly179, Gly181, Lys182, and Thr183. Residues 355 to 475 (KLNAQPVTLE…VELLKRQLQE (121 aa)) are domain IV, binds dsDNA.

It belongs to the DnaA family. Oligomerizes as a right-handed, spiral filament on DNA at oriC.

The protein localises to the cytoplasm. Its function is as follows. Plays an essential role in the initiation and regulation of chromosomal replication. ATP-DnaA binds to the origin of replication (oriC) to initiate formation of the DNA replication initiation complex once per cell cycle. Binds the DnaA box (a 9 base pair repeat at the origin) and separates the double-stranded (ds)DNA. Forms a right-handed helical filament on oriC DNA; dsDNA binds to the exterior of the filament while single-stranded (ss)DNA is stabiized in the filament's interior. The ATP-DnaA-oriC complex binds and stabilizes one strand of the AT-rich DNA unwinding element (DUE), permitting loading of DNA polymerase. After initiation quickly degrades to an ADP-DnaA complex that is not apt for DNA replication. Binds acidic phospholipids. This Nitrobacter hamburgensis (strain DSM 10229 / NCIMB 13809 / X14) protein is Chromosomal replication initiator protein DnaA.